Here is a 318-residue protein sequence, read N- to C-terminus: Small ribosomal subunit biogenesis GTPase RsgA (318 aa).

The 165-residue stretch at 82–246 (RQDEIRTKSF…LIDSPGFQEF (165 aa)) folds into the CP-type G domain. GTP is bound by residues 132-135 (NKSD) and 186-194 (GPSGAGKST). Zn(2+)-binding residues include cysteine 270, cysteine 275, histidine 277, and cysteine 283.

This sequence belongs to the TRAFAC class YlqF/YawG GTPase family. RsgA subfamily. As to quaternary structure, monomer. Associates with 30S ribosomal subunit, binds 16S rRNA. Zn(2+) serves as cofactor.

The protein resides in the cytoplasm. Functionally, one of several proteins that assist in the late maturation steps of the functional core of the 30S ribosomal subunit. Helps release RbfA from mature subunits. May play a role in the assembly of ribosomal proteins into the subunit. Circularly permuted GTPase that catalyzes slow GTP hydrolysis, GTPase activity is stimulated by the 30S ribosomal subunit. The protein is Small ribosomal subunit biogenesis GTPase RsgA of Variovorax paradoxus (strain S110).